The primary structure comprises 162 residues: Cyclic pyranopterin monophosphate synthase (162 aa).

Residues 75–77 (LCH) and 113–114 (ME) contribute to the substrate site. Asp-128 is an active-site residue.

Belongs to the MoaC family. As to quaternary structure, homohexamer; trimer of dimers.

The catalysed reaction is (8S)-3',8-cyclo-7,8-dihydroguanosine 5'-triphosphate = cyclic pyranopterin phosphate + diphosphate. Its pathway is cofactor biosynthesis; molybdopterin biosynthesis. Its function is as follows. Catalyzes the conversion of (8S)-3',8-cyclo-7,8-dihydroguanosine 5'-triphosphate to cyclic pyranopterin monophosphate (cPMP). In Klebsiella pneumoniae (strain 342), this protein is Cyclic pyranopterin monophosphate synthase.